Reading from the N-terminus, the 374-residue chain is Mitochondrial inner membrane protein oxa1-1 (374 aa).

A helical membrane pass occupies residues 77-97; the sequence is TINVYAGAPWWVSIILTTLGV. Residues 98 to 159 lie on the Mitochondrial intermembrane side of the membrane; the sequence is RLALTPVMIA…GIYLKHNVNP (62 aa). Residues 160–180 traverse the membrane as a helical segment; the sequence is FAIFILPLTQSAVFFSFFYAI. Residues 181-242 lie on the Mitochondrial matrix side of the membrane; it reads RKMSRLSVDG…TIGNSTNWRT (62 aa). Residues 243–263 form a helical membrane-spanning segment; the sequence is FFFLCCLLSPLLTAKLPAAIF. Residues 264–374 lie on the Mitochondrial intermembrane side of the membrane; sequence MYWIPSSLFN…SKKNSKKQSN (111 aa).

This sequence belongs to the OXA1/ALB3/YidC family.

Its subcellular location is the mitochondrion inner membrane. Required for the insertion of integral membrane proteins into the mitochondrial inner membrane. Essential for the activity and assembly of cytochrome c oxidase. Not essential for viability, while oxa102 is essential. When both genes are deleted the cell is non-viable, suggesting that oxa101 act as a back-up for oxa102. This Schizosaccharomyces pombe (strain 972 / ATCC 24843) (Fission yeast) protein is Mitochondrial inner membrane protein oxa1-1 (oxa101).